A 767-amino-acid chain; its full sequence is MMKQCARRQMTEPVFRVAVLLALCSLSIGVDVHQAQKTPSISSAALQRHKRDWKWDKLYAYEETRPKNPPEKIGKLENTFFSSSTRYILKGDGAKDKFGVTDNGDIVVLAKLDRETQSVYNLSASLLNIHTGELVDKDESFVIVVLDINDNIPVFDSDQSGSISESSRAGTTIMKVKATDADDSSTENGRIDFKLLNGTDLFKIKPNGDLIALKSDLDREKQSQYLIAVQAKDMPEHLTGNSATTVVTINIKDINDNIATFKKERYQFTVKEDLKPGSEIGLLEVEDKDEIQNKDPTFALQSKFNDVFDIKRTKEKDGMLSLKVPLDYEKEKTHKFIVIVEEHTVSRTPDNKGLLKRTEVIIDVTDVDEPPIFNQTEYTFSVFEGPFKNPVIGAVSAKDPDSASYKIRYTIEDANCPVDVDPVNGYLSLKRTLDREQESLYTFQVTAHEDVLNGLKSSTMVSLKVLDINDNAPELTNGSYVYVCENDKPNTIIGTIGASDKDENSGRFRFTLARKSSNFSLYDNQDNTATIVLKQGGFSTENSEEYVLEIEIADGGTPEQKSVNLLQIKVCTCQSGRRVEYCMSYARTGMSVSALLAILLCIITILVIVILIVLRRRYQKEVLVTKASGEIHEQLVRYDEEGGGEMDTNGYDVSILSSACHDSSFRPSVGPALYAMVKKPPACKGDMAMMIEVKKDEADRDRDGIPYDTLHIYGYEGTESLAGSLSSLDSSSSGSNLDYDFIHEWGPRFRTLAQLYGVDGSDSDSSY.

The N-terminal stretch at 1 to 29 is a signal peptide; that stretch reads MMKQCARRQMTEPVFRVAVLLALCSLSIG. Residues 30-51 constitute a propeptide that is removed on maturation; it reads VDVHQAQKTPSISSAALQRHKR. Residues 30-593 lie on the Extracellular side of the membrane; sequence VDVHQAQKTP…SYARTGMSVS (564 aa). Glu62, Glu63, Asp113, and Glu115 together coordinate Ca(2+). 5 Cadherin domains span residues 86–155, 155–261, 262–373, 374–475, and 475–581; these read RYIL…IPVF, FDSD…IATF, KKER…PPIF, NQTE…APEL, and LTNG…RVEY. Asn121 is a glycosylation site (N-linked (GlcNAc...) asparagine). Asp147, Ile148, Asn149, Asp150, Asn151, Asp180, and Asp182 together coordinate Ca(2+). Asn197 carries an N-linked (GlcNAc...) asparagine glycan. Asp233 contacts Ca(2+). N-linked (GlcNAc...) asparagine glycosylation is found at Asn374, Asn477, and Asn518. Residues 594–614 traverse the membrane as a helical segment; that stretch reads ALLAILLCIITILVIVILIVL. Residues 615-767 lie on the Cytoplasmic side of the membrane; sequence RRRYQKEVLV…VDGSDSDSSY (153 aa).

The protein localises to the cell membrane. Its subcellular location is the cell junction. The protein resides in the adherens junction. Functionally, cadherins are calcium-dependent cell adhesion proteins. They preferentially interact with themselves in a homophilic manner in connecting cells; cadherins may thus contribute to the sorting of heterogeneous cell types. Required for embryonic cardiac looping and heart chamber development, via promotion of cell-cell junction formation and subsequent attachment between the endothelial and myocardial layers of the heart. Required for the directional migration and delamination of endothelial cell monolayers, by which common cardinal veins form via the lumen ensheathment mechanism of vessel development as they migrate and connect with the heart inflow tract. Required for the formation of filopodia extensions (sprouts) at the initiation of intersegmental vessel development, by acting (via its C-terminus) to facilitate anchoring of the actin cytoskeleton to cell junctions in endothelial cells. Then positively regulates dorsal migration of stalk cells and sprout outgrowth towards the dorsal longitudinal anastomotic vessels (DLAV) via endothelial cell elongation. Following contact with the DLAV, required for intersegmental vessel lumen formation, potentially via facilitating the formation and/or extension of endothelial cell tight junctions that are required during tubulogenesis. In Danio rerio (Zebrafish), this protein is Cadherin-5.